The chain runs to 250 residues: MADS-box transcription factor 47 (250 aa).

Over residues 1 to 10 (MAGGGGGGGR) the composition is skewed to gly residues. 2 disordered regions span residues 1–20 (MAGGGGGGGRGEGEGRAATG) and 196–250 (SRME…FSSK). A compositionally biased stretch (basic and acidic residues) spans 11-20 (GEGEGRAATG). The MADS-box domain maps to 20 to 80 (GKRERIAIRR…GKLFQFASTS (61 aa)). The K-box domain maps to 106 to 198 (QGEDSSTCAR…QLQVSRMSRM (93 aa)). The segment covering 214–224 (GQSSESVTNAS) has biased composition (polar residues).

May interact with MADS18. In terms of tissue distribution, expressed in roots, shoots and developing panicles. Expressed in mature stems and leaves, flowering panicles, developing seeds, and mature seeds.

The protein resides in the nucleus. In terms of biological role, transcription factor that modulates expressions of multiple genes involved in cell signaling and gene transcription. Plays a negative regulatory role in brassinosteroid signaling. The chain is MADS-box transcription factor 47 from Oryza sativa subsp. japonica (Rice).